The chain runs to 138 residues: Ribosome-binding factor A (138 aa).

A disordered region spans residues 116–138 (VAQDSQHQEGPASPDAKPESTEE).

Belongs to the RbfA family. Monomer. Binds 30S ribosomal subunits, but not 50S ribosomal subunits or 70S ribosomes.

Its subcellular location is the cytoplasm. One of several proteins that assist in the late maturation steps of the functional core of the 30S ribosomal subunit. Associates with free 30S ribosomal subunits (but not with 30S subunits that are part of 70S ribosomes or polysomes). Required for efficient processing of 16S rRNA. May interact with the 5'-terminal helix region of 16S rRNA. The chain is Ribosome-binding factor A from Pseudomonas syringae pv. tomato (strain ATCC BAA-871 / DC3000).